Reading from the N-terminus, the 157-residue chain is Protein Smg (157 aa).

It belongs to the Smg family.

The polypeptide is Protein Smg (Escherichia coli O139:H28 (strain E24377A / ETEC)).